The primary structure comprises 125 residues: Small ribosomal subunit protein uS13 (125 aa).

It belongs to the universal ribosomal protein uS13 family. Part of the 30S ribosomal subunit. Forms a loose heterodimer with protein S19. Forms two bridges to the 50S subunit in the 70S ribosome.

Functionally, located at the top of the head of the 30S subunit, it contacts several helices of the 16S rRNA. In the 70S ribosome it contacts the 23S rRNA (bridge B1a) and protein L5 of the 50S subunit (bridge B1b), connecting the 2 subunits; these bridges are implicated in subunit movement. Contacts the tRNAs in the A and P-sites. This is Small ribosomal subunit protein uS13 from Gluconacetobacter diazotrophicus (strain ATCC 49037 / DSM 5601 / CCUG 37298 / CIP 103539 / LMG 7603 / PAl5).